Here is a 169-residue protein sequence, read N- to C-terminus: Large ribosomal subunit protein uL10 (169 aa).

This sequence belongs to the universal ribosomal protein uL10 family. In terms of assembly, part of the ribosomal stalk of the 50S ribosomal subunit. The N-terminus interacts with L11 and the large rRNA to form the base of the stalk. The C-terminus forms an elongated spine to which L12 dimers bind in a sequential fashion forming a multimeric L10(L12)X complex.

In terms of biological role, forms part of the ribosomal stalk, playing a central role in the interaction of the ribosome with GTP-bound translation factors. This is Large ribosomal subunit protein uL10 from Lactobacillus delbrueckii subsp. bulgaricus (strain ATCC 11842 / DSM 20081 / BCRC 10696 / JCM 1002 / NBRC 13953 / NCIMB 11778 / NCTC 12712 / WDCM 00102 / Lb 14).